A 238-amino-acid chain; its full sequence is Adenylate dimethylallyltransferase (238 aa).

This sequence belongs to the isopentenyl transferase family.

It catalyses the reaction dimethylallyl diphosphate + AMP = N(6)-(dimethylallyl)adenosine 5'-phosphate + diphosphate. Transfers dimethylallyl groups to AMP as part of the biosynthesis of cytokinin phytohormones. This chain is Adenylate dimethylallyltransferase (tzs), found in Ralstonia solanacearum (Pseudomonas solanacearum).